The sequence spans 205 residues: Putative 3-methyladenine DNA glycosylase (205 aa).

It belongs to the DNA glycosylase MPG family.

The sequence is that of Putative 3-methyladenine DNA glycosylase from Bacillus cereus (strain G9842).